A 353-amino-acid chain; its full sequence is MAVAENAGVKVDSSGQNLDNNNTAASATETTKPPCPDDDQSPKSDSSTPLTIDSTPETDDRINETAQKVQTLNGFSGNGERDNNGEIKDLADAFSKLNPMAQEFVPPSLARSQSGVLRNGLGFTNNFAAPPKLADGNDHFPRRRRSFGQGKRRMNKRTSLAQKDDVIRRTVYVSDIDQQVTEENLAGVFINCGQVVDCRVCGDPNSVLRFAFIEFTNEEGARAALSMSGTVLGFYPLKVLPSKTAIAPVNPTFLPRSEDEREMCVRTVYCTNIDKRITQIDLKGFFEMLCGEVHRLRLGDYHHQTRIAFVEFAMAESAIAALHCSGIVLGALPIRVSPSKTPVRPHFPRAEFK.

Positions 1–61 (MAVAENAGVK…IDSTPETDDR (61 aa)) are disordered. Over residues 20–31 (NNNTAASATETT) the composition is skewed to low complexity. Residues 96 to 106 (KLNPMAQEFVP) carry the PAM2-like motif. Positions 128-159 (AAPPKLADGNDHFPRRRRSFGQGKRRMNKRTS) are disordered. The span at 141–156 (PRRRRSFGQGKRRMNK) shows a compositional bias: basic residues. The Bipartite nuclear localization signal signature appears at 142-153 (RRRRSFGQGKRR). RRM domains lie at 169–244 (RTVY…PSKT) and 266–341 (RTVY…PSKT).

As to expression, expressed in cauline leaves, stems, rosette leaves, immature siliques and primary inflorescences.

It is found in the nucleus. In Arabidopsis thaliana (Mouse-ear cress), this protein is Polyadenylate-binding protein-interacting protein 10 (CID10).